The following is a 473-amino-acid chain: Anthocyanidin 5,3-O-glucosyltransferase (473 aa).

This sequence belongs to the UDP-glycosyltransferase family.

It participates in pigment biosynthesis; anthocyanin biosynthesis. Sequentially catalyzes two glycosylation steps at the 5-OH and 3-OH positions of anthocyanidin. Unglycosylated anthocyanidin or anthocyanidin 5-O-glucoside, but not anthocyanidin 3-O-glucoside, can be used as glucosyl acceptor. This Rosa hybrid cultivar protein is Anthocyanidin 5,3-O-glucosyltransferase (RhGT1).